The chain runs to 34 residues: Photosystem I reaction center subunit XII (34 aa).

A helical transmembrane segment spans residues 10–32; it reads IFIALVVAAHAGVLAVRLCVSLY.

Belongs to the PsaM family.

It localises to the cellular thylakoid membrane. The polypeptide is Photosystem I reaction center subunit XII (Synechococcus sp. (strain WH7803)).